The following is a 236-amino-acid chain: Leucyl/phenylalanyl-tRNA--protein transferase (236 aa).

Belongs to the L/F-transferase family.

It localises to the cytoplasm. The catalysed reaction is N-terminal L-lysyl-[protein] + L-leucyl-tRNA(Leu) = N-terminal L-leucyl-L-lysyl-[protein] + tRNA(Leu) + H(+). The enzyme catalyses N-terminal L-arginyl-[protein] + L-leucyl-tRNA(Leu) = N-terminal L-leucyl-L-arginyl-[protein] + tRNA(Leu) + H(+). It catalyses the reaction L-phenylalanyl-tRNA(Phe) + an N-terminal L-alpha-aminoacyl-[protein] = an N-terminal L-phenylalanyl-L-alpha-aminoacyl-[protein] + tRNA(Phe). Its function is as follows. Functions in the N-end rule pathway of protein degradation where it conjugates Leu, Phe and, less efficiently, Met from aminoacyl-tRNAs to the N-termini of proteins containing an N-terminal arginine or lysine. The chain is Leucyl/phenylalanyl-tRNA--protein transferase from Shewanella sp. (strain MR-7).